The sequence spans 244 residues: Guanine nucleotide exchange factor rei-1 (244 aa).

Coiled coils occupy residues 6–39 (DQLI…KKQF) and 81–144 (VQQA…KAEK). The interval 221-244 (DQIHQERSSQSSLAPSSDAESDSS) is disordered. Residues 228-238 (SSQSSLAPSSD) show a composition bias toward low complexity.

Belongs to the SH3BP5 family. As to quaternary structure, homodimer, tetramer and multimer. Interacts with rab-11.1. Binds preferentially to the GDP-bound form of rab-11.1. As to expression, expressed in germ cells.

Its subcellular location is the cytoplasmic granule. The protein resides in the golgi apparatus membrane. In terms of biological role, guanine nucleotide exchange factor for Rab GTPase Rab-11.1. Spatially and temporally regulates the distribution of Rab-11.1 to target membranes during embryogenesis. Plays a role in cytokinesis, probably by targeting rab-11.1 to the cleavage furrows. The polypeptide is Guanine nucleotide exchange factor rei-1 (Caenorhabditis elegans).